We begin with the raw amino-acid sequence, 119 residues long: Large ribosomal subunit protein uL24 (119 aa).

Belongs to the universal ribosomal protein uL24 family. As to quaternary structure, part of the 50S ribosomal subunit.

In terms of biological role, one of two assembly initiator proteins, it binds directly to the 5'-end of the 23S rRNA, where it nucleates assembly of the 50S subunit. One of the proteins that surrounds the polypeptide exit tunnel on the outside of the subunit. The chain is Large ribosomal subunit protein uL24 from Leptospira interrogans serogroup Icterohaemorrhagiae serovar copenhageni (strain Fiocruz L1-130).